Consider the following 235-residue polypeptide: Carboxy-S-adenosyl-L-methionine synthase (235 aa).

S-adenosyl-L-methionine-binding positions include Tyr35, 60-62, 83-84, Asn124, and Arg191; these read GCS and DN.

It belongs to the class I-like SAM-binding methyltransferase superfamily. Cx-SAM synthase family. As to quaternary structure, homodimer.

The enzyme catalyses prephenate + S-adenosyl-L-methionine = carboxy-S-adenosyl-L-methionine + 3-phenylpyruvate + H2O. In terms of biological role, catalyzes the conversion of S-adenosyl-L-methionine (SAM) to carboxy-S-adenosyl-L-methionine (Cx-SAM). In Campylobacter jejuni subsp. jejuni serotype O:2 (strain ATCC 700819 / NCTC 11168), this protein is Carboxy-S-adenosyl-L-methionine synthase.